We begin with the raw amino-acid sequence, 460 residues long: Monocarboxylate transporter 12 (460 aa).

The Cytoplasmic portion of the chain corresponds to 1–10 (MTQEKRSLHK). Transmembrane regions (helical) follow at residues 11–31 (TPPD…VTVC), 58–78 (AWIH…GSYV), 86–106 (VGII…SFAT), 115–135 (LGVL…AMVG), 148–168 (IAMS…QLLI), 177–197 (LLIL…MRPI), 246–266 (FIIL…PFVY), 282–302 (AFLM…FGWV), 329–349 (FLPI…FGYF), 354–374 (VALI…SSAL), 376–396 (VVFF…GWLV), and 406–426 (FLLS…AKII). Residues 427 to 460 (NRIKKNPQATVVRSSDIKQEVWTNGDVSCLNAIS) lie on the Cytoplasmic side of the membrane.

The protein belongs to the major facilitator superfamily. Monocarboxylate porter (TC 2.A.1.13) family.

It is found in the cell membrane. The protein resides in the basolateral cell membrane. The enzyme catalyses creatine(in) = creatine(out). It carries out the reaction guanidinoacetate(in) = guanidinoacetate(out). Functionally, functions as a transporter for creatine and as well for its precursor guanidinoacetate. Transport of creatine and GAA is independent of resting membrane potential and extracellular Na(+), Cl(-), or pH. Contributes to the process of creatine biosynthesis and distribution. This is Monocarboxylate transporter 12 (slc16a12) from Xenopus laevis (African clawed frog).